A 455-amino-acid chain; its full sequence is Signal recognition particle 54 kDa protein (455 aa).

GTP is bound by residues 104-111 (GLYGHGKT), 184-188 (DTSGR), and 242-245 (TKMD).

It belongs to the GTP-binding SRP family. SRP54 subfamily. Part of the signal recognition particle protein translocation system, which is composed of SRP and FtsY. Archaeal SRP consists of a 7S RNA molecule of 300 nucleotides and two protein subunits: SRP54 and SRP19.

The protein localises to the cytoplasm. It catalyses the reaction GTP + H2O = GDP + phosphate + H(+). In terms of biological role, involved in targeting and insertion of nascent membrane proteins into the cytoplasmic membrane. Binds to the hydrophobic signal sequence of the ribosome-nascent chain (RNC) as it emerges from the ribosomes. The SRP-RNC complex is then targeted to the cytoplasmic membrane where it interacts with the SRP receptor FtsY. The chain is Signal recognition particle 54 kDa protein from Thermoplasma volcanium (strain ATCC 51530 / DSM 4299 / JCM 9571 / NBRC 15438 / GSS1).